A 160-amino-acid polypeptide reads, in one-letter code: SsrA-binding protein (160 aa).

The disordered stretch occupies residues 133 to 160 (KKEHDKREDLKEREWQRDKERMMKNKGR).

The protein belongs to the SmpB family.

Its subcellular location is the cytoplasm. Its function is as follows. Required for rescue of stalled ribosomes mediated by trans-translation. Binds to transfer-messenger RNA (tmRNA), required for stable association of tmRNA with ribosomes. tmRNA and SmpB together mimic tRNA shape, replacing the anticodon stem-loop with SmpB. tmRNA is encoded by the ssrA gene; the 2 termini fold to resemble tRNA(Ala) and it encodes a 'tag peptide', a short internal open reading frame. During trans-translation Ala-aminoacylated tmRNA acts like a tRNA, entering the A-site of stalled ribosomes, displacing the stalled mRNA. The ribosome then switches to translate the ORF on the tmRNA; the nascent peptide is terminated with the 'tag peptide' encoded by the tmRNA and targeted for degradation. The ribosome is freed to recommence translation, which seems to be the essential function of trans-translation. This is SsrA-binding protein from Tolumonas auensis (strain DSM 9187 / NBRC 110442 / TA 4).